We begin with the raw amino-acid sequence, 883 residues long: Alanine--tRNA ligase (883 aa).

Residues histidine 562, histidine 566, cysteine 675, and histidine 679 each contribute to the Zn(2+) site.

The protein belongs to the class-II aminoacyl-tRNA synthetase family. Zn(2+) is required as a cofactor.

It localises to the cytoplasm. It carries out the reaction tRNA(Ala) + L-alanine + ATP = L-alanyl-tRNA(Ala) + AMP + diphosphate. Catalyzes the attachment of alanine to tRNA(Ala) in a two-step reaction: alanine is first activated by ATP to form Ala-AMP and then transferred to the acceptor end of tRNA(Ala). Also edits incorrectly charged Ser-tRNA(Ala) and Gly-tRNA(Ala) via its editing domain. This Ruegeria sp. (strain TM1040) (Silicibacter sp.) protein is Alanine--tRNA ligase.